We begin with the raw amino-acid sequence, 64 residues long: Large ribosomal subunit protein bL33 (64 aa).

It belongs to the bacterial ribosomal protein bL33 family.

This is Large ribosomal subunit protein bL33 from Prochlorococcus marinus (strain MIT 9313).